The following is a 193-amino-acid chain: Ion-translocating oxidoreductase complex subunit A (193 aa).

6 consecutive transmembrane segments (helical) span residues 5–25 (LLLFVGTILVNNFVLVKFLGL), 39–59 (MGMGLATTFVMTLASICAWLI), 63–83 (ILIPLNLIYLRTLAFILVIAV), 102–122 (LLGIFLPLITTNCAVLGVALL), 134–154 (ALYGFSAAVGFSLVMVLFTAI), and 171–191 (AIALITAGLMSLAFMGFSGLV).

This sequence belongs to the NqrDE/RnfAE family. In terms of assembly, the complex is composed of six subunits: RsxA, RsxB, RsxC, RsxD, RsxE and RsxG.

The protein localises to the cell inner membrane. Functionally, part of a membrane-bound complex that couples electron transfer with translocation of ions across the membrane. Required to maintain the reduced state of SoxR. The sequence is that of Ion-translocating oxidoreductase complex subunit A from Shigella boydii serotype 4 (strain Sb227).